Here is a 141-residue protein sequence, read N- to C-terminus: Transcriptional regulator MraZ (141 aa).

SpoVT-AbrB domains are found at residues 5–47 (EYNH…PNEE) and 75–118 (AADC…SKER).

This sequence belongs to the MraZ family. Forms oligomers.

It localises to the cytoplasm. The protein localises to the nucleoid. This chain is Transcriptional regulator MraZ, found in Lachnoclostridium phytofermentans (strain ATCC 700394 / DSM 18823 / ISDg) (Clostridium phytofermentans).